Here is a 99-residue protein sequence, read N- to C-terminus: Bublin coiled-coil protein (99 aa).

A coiled-coil region spans residues 34–71 (LDQINSCLDDIEERNDALNGKLQELLESNRAARRDFRQ). The span at 66 to 78 (RRDFRQQITDHAD) shows a compositional bias: basic and acidic residues. Residues 66–99 (RRDFRQQITDHADLPPPANDDDEDEQSRDAQKKD) form a disordered region.

Belongs to the UPF0184 (EST00098) family.

The protein localises to the cell junction. Its subcellular location is the cytoplasm. It is found in the cytoskeleton. Its function is as follows. Essential for intermediate filament organization in intestinal cells, interacts with intermediate filament and regulates intestinal lumen morphology. This chain is Bublin coiled-coil protein (bbln), found in Danio rerio (Zebrafish).